Consider the following 158-residue polypeptide: S-ribosylhomocysteine lyase (158 aa).

Fe cation-binding residues include His-56, His-60, and Cys-125.

Belongs to the LuxS family. As to quaternary structure, homodimer. Fe cation serves as cofactor.

It carries out the reaction S-(5-deoxy-D-ribos-5-yl)-L-homocysteine = (S)-4,5-dihydroxypentane-2,3-dione + L-homocysteine. Functionally, involved in the synthesis of autoinducer 2 (AI-2) which is secreted by bacteria and is used to communicate both the cell density and the metabolic potential of the environment. The regulation of gene expression in response to changes in cell density is called quorum sensing. Catalyzes the transformation of S-ribosylhomocysteine (RHC) to homocysteine (HC) and 4,5-dihydroxy-2,3-pentadione (DPD). The polypeptide is S-ribosylhomocysteine lyase (Leuconostoc mesenteroides subsp. mesenteroides (strain ATCC 8293 / DSM 20343 / BCRC 11652 / CCM 1803 / JCM 6124 / NCDO 523 / NBRC 100496 / NCIMB 8023 / NCTC 12954 / NRRL B-1118 / 37Y)).